We begin with the raw amino-acid sequence, 680 residues long: DNA-directed RNA polymerase subunit beta' (680 aa).

Residues Cys69, Cys71, Cys87, and Cys90 each contribute to the Zn(2+) site. Mg(2+)-binding residues include Asp489, Asp491, and Asp493.

Belongs to the RNA polymerase beta' chain family. RpoC1 subfamily. In terms of assembly, in plastids the minimal PEP RNA polymerase catalytic core is composed of four subunits: alpha, beta, beta', and beta''. When a (nuclear-encoded) sigma factor is associated with the core the holoenzyme is formed, which can initiate transcription. Mg(2+) serves as cofactor. Zn(2+) is required as a cofactor.

Its subcellular location is the plastid. It is found in the chloroplast. The catalysed reaction is RNA(n) + a ribonucleoside 5'-triphosphate = RNA(n+1) + diphosphate. DNA-dependent RNA polymerase catalyzes the transcription of DNA into RNA using the four ribonucleoside triphosphates as substrates. This is DNA-directed RNA polymerase subunit beta' from Cucumis sativus (Cucumber).